The primary structure comprises 67 residues: DNA-directed RNA polymerase subunit omega (67 aa).

The protein belongs to the RNA polymerase subunit omega family. The RNAP catalytic core consists of 2 alpha, 1 beta, 1 beta' and 1 omega subunit. When a sigma factor is associated with the core the holoenzyme is formed, which can initiate transcription.

The enzyme catalyses RNA(n) + a ribonucleoside 5'-triphosphate = RNA(n+1) + diphosphate. Functionally, promotes RNA polymerase assembly. Latches the N- and C-terminal regions of the beta' subunit thereby facilitating its interaction with the beta and alpha subunits. The polypeptide is DNA-directed RNA polymerase subunit omega (Listeria monocytogenes serotype 4b (strain F2365)).